We begin with the raw amino-acid sequence, 23 residues long: Protein YsaE (23 aa).

In Escherichia coli (strain K12), this protein is Protein YsaE.